Reading from the N-terminus, the 105-residue chain is Iron-sulfur cluster assembly protein CyaY (105 aa).

It belongs to the frataxin family.

Involved in iron-sulfur (Fe-S) cluster assembly. May act as a regulator of Fe-S biogenesis. The polypeptide is Iron-sulfur cluster assembly protein CyaY (Photobacterium profundum (strain SS9)).